Consider the following 2575-residue polypeptide: Non-reducing polyketide synthase pks11 (2575 aa).

Residues 89–228 enclose the Starter acyltransferase (SAT) domain; the sequence is LANIILSPLV…ASKTVSTLQG (140 aa). The Nucleophile; for transacylase activity role is filled by cysteine 129. The active-site Proton donor/acceptor; for transacylase activity is histidine 247. The Ketosynthase family 3 (KS3) domain maps to 373–790; sequence EDDIAVVGMS…GSNASAVVTE (418 aa). Active-site for beta-ketoacyl synthase activity residues include cysteine 538, histidine 673, and histidine 713. One can recognise a Malonyl-CoA:ACP transacylase (MAT) domain in the interval 901–1192; it reads FGGQISTYVG…TNMASRALGS (292 aa). The tract at residues 1276–1409 is N-terminal hotdog fold; that stretch reads PKGLWSFIDY…GQIIFVSTDN (134 aa). A PKS/mFAS DH domain is found at 1276-1586; that stretch reads PKGLWSFIDY…YHKVAKATMS (311 aa). A product template (PT) domain region spans residues 1307–1584; it reads LVSGHIIAQT…VNYHKVAKAT (278 aa). Histidine 1311 acts as the Proton acceptor; for dehydratase activity in catalysis. The interval 1437–1586 is C-terminal hotdog fold; sequence ADDIIQGRNI…YHKVAKATMS (150 aa). Aspartate 1493 acts as the Proton donor; for dehydratase activity in catalysis. Positions 1597 to 1606 are enriched in polar residues; it reads TTSTSTNVKS. A disordered region spans residues 1597–1636; it reads TTSTSTNVKSSPAAAEGSSPVENGASGSGSKAKKTKSGAG. Residues 1637-1711 form the Carrier domain; that stretch reads QDVVNKTKGL…GLVQIIKSTL (75 aa). Serine 1671 bears the O-(pantetheine 4'-phosphoryl)serine mark. Residues 1713–1762 form a disordered region; sequence VSDDEEGSDQEGSEASSSESSTTFTPSTTATTVSDVEDNGNEKSIGKEKS. Residues 1714-1724 show a composition bias toward acidic residues; the sequence is SDDEEGSDQEG. Over residues 1725–1746 the composition is skewed to low complexity; that stretch reads SEASSSESSTTFTPSTTATTVS. The span at 1752–1762 shows a compositional bias: basic and acidic residues; that stretch reads GNEKSIGKEKS. The segment at 1835 to 2130 is methyltransferase domain; the sequence is LTRIPHDPQH…HIDWTDGNSP (296 aa). In terms of domain architecture, Thioester reductase (TE) spans 2204-2448; the sequence is ITGATGSLGS…LCWTPVDDVA (245 aa).

Requires pantetheine 4'-phosphate as cofactor.

It participates in secondary metabolite biosynthesis. In terms of biological role, non-reducing polyketide synthase; part of the gene cluster that mediates the biosynthesis of mitorubrinol and mitorubrinic acid, two virulence factors that improve T.marneffei intracellular survival in macrophages. The two polyketide synthases pks12 and pks11 are probably responsible for sequential use in the biosynthesis of mitorubrinol and mitorubrinic acid. The first part of the biosynthesis is probably catalyzed by pks12, which synthesized orsellinic acid. This tetraketide is then used as a starter unit for pks11, which possesses a SAT domain, in the second part of the biosynthesis. Pks11, contains a methyltransferase domain, also served that methylates the products, using a methyl group from S-adenosylmethionine. The polypeptide is Non-reducing polyketide synthase pks11 (Talaromyces marneffei (Penicillium marneffei)).